The chain runs to 347 residues: NADH-ubiquinone oxidoreductase chain 2 (347 aa).

10 helical membrane-spanning segments follow: residues 13–33 (IFAG…WVGL), 55–75 (AAIK…MAIL), 96–116 (LMIV…FWVP), 123–143 (PLMS…SIMY), 150–170 (NVSL…WGGL), 178–198 (ILAY…PYNP), 201–221 (TILN…LLNL), 247–267 (TLLS…WLII), 277–297 (ITPT…LRLI), and 325–345 (FLPT…FMLM).

It belongs to the complex I subunit 2 family. As to quaternary structure, core subunit of respiratory chain NADH dehydrogenase (Complex I) which is composed of 45 different subunits. Interacts with TMEM242.

The protein resides in the mitochondrion inner membrane. It catalyses the reaction a ubiquinone + NADH + 5 H(+)(in) = a ubiquinol + NAD(+) + 4 H(+)(out). Core subunit of the mitochondrial membrane respiratory chain NADH dehydrogenase (Complex I) which catalyzes electron transfer from NADH through the respiratory chain, using ubiquinone as an electron acceptor. Essential for the catalytic activity and assembly of complex I. In Gorilla gorilla gorilla (Western lowland gorilla), this protein is NADH-ubiquinone oxidoreductase chain 2.